Consider the following 89-residue polypeptide: Small ribosomal subunit protein bS16 (89 aa).

Belongs to the bacterial ribosomal protein bS16 family.

This is Small ribosomal subunit protein bS16 from Geobacillus stearothermophilus (Bacillus stearothermophilus).